Consider the following 306-residue polypeptide: uncharacterized protein (306 aa).

To M.jannaschii MJ0658.

This is an uncharacterized protein from Methanothermobacter thermautotrophicus (strain ATCC 29096 / DSM 1053 / JCM 10044 / NBRC 100330 / Delta H) (Methanobacterium thermoautotrophicum).